A 101-amino-acid polypeptide reads, in one-letter code: Large ribosomal subunit protein eL30 (101 aa).

Belongs to the eukaryotic ribosomal protein eL30 family.

The polypeptide is Large ribosomal subunit protein eL30 (Pyrobaculum islandicum (strain DSM 4184 / JCM 9189 / GEO3)).